A 484-amino-acid chain; its full sequence is Putative transporter B0252.3 (484 aa).

A run of 11 helical transmembrane segments spans residues 43–63, 95–115, 121–141, 144–164, 183–203, 208–228, 286–306, 321–341, 348–368, 373–393, and 433–453; these read ILTCILVCGLAWSPLAFTGLC, STTTFYMVGNMIGGMFIPPLA, LPVFVATVLLMAVGGMISAFS, IMMFCIMRMIHGIFYTAAGLA, VYFGVMWVVGACFLGLLAYIL, YLMFCISVPNIFVALLIYMTV, MFIVYVLVMTYIWIVDTFIYF, LNFVLMSLVEAPAYIFSPIFM, VLISGTHIIAGLSFLGIVLSS, IHFWLLGKFAISCSFMSIYMF, and LAPAITLSLIAVSGGLLTLIL.

This sequence belongs to the major facilitator superfamily. Sugar transporter (TC 2.A.1.1) family.

The protein resides in the membrane. The sequence is that of Putative transporter B0252.3 from Caenorhabditis elegans.